The sequence spans 206 residues: Ras-related protein Rab-14 (206 aa).

15 to 22 provides a ligand contact to GTP; it reads GDMGVGKS. Positions 37–45 match the Effector region motif; sequence SPHTIGVEF. GTP is bound by residues 63-67 and 121-124; these read DTAGQ and NKKD. The interval 182-206 is disordered; sequence PDGGITKNPPQTITDKPQDASKCSC. A compositionally biased stretch (polar residues) spans 189-206; it reads NPPQTITDKPQDASKCSC. 2 S-geranylgeranyl cysteine lipidation sites follow: C204 and C206. C206 carries the post-translational modification Cysteine methyl ester.

This sequence belongs to the small GTPase superfamily. Rab family.

It localises to the endosome. The protein localises to the contractile vacuole. It is found in the membrane. It catalyses the reaction GTP + H2O = GDP + phosphate + H(+). Its activity is regulated as follows. Rab activation is generally mediated by a guanine exchange factor (GEF), while inactivation through hydrolysis of bound GTP is catalyzed by a GTPase activating protein (GAP). That Rab is activated by the DENND6A and DENND6B guanine exchange factors (GEF). The small GTPases Rab are key regulators of intracellular membrane trafficking, from the formation of transport vesicles to their fusion with membranes. Rabs cycle between an inactive GDP-bound form and an active GTP-bound form that is able to recruit to membranes different set of downstream effectors directly responsible for vesicle formation, movement, tethering and fusion. Regulates the fusion of phagosomes and lysosomes. The polypeptide is Ras-related protein Rab-14 (rab14) (Dictyostelium discoideum (Social amoeba)).